The chain runs to 132 residues: Small ribosomal subunit protein uS8 (132 aa).

It belongs to the universal ribosomal protein uS8 family. In terms of assembly, part of the 30S ribosomal subunit. Contacts proteins S5 and S12.

In terms of biological role, one of the primary rRNA binding proteins, it binds directly to 16S rRNA central domain where it helps coordinate assembly of the platform of the 30S subunit. The chain is Small ribosomal subunit protein uS8 from Shouchella clausii (strain KSM-K16) (Alkalihalobacillus clausii).